We begin with the raw amino-acid sequence, 929 residues long: Bifunctional uridylyltransferase/uridylyl-removing enzyme (929 aa).

The tract at residues 1–383 (MDSVTTEHKQ…RPTPAKRRVP (383 aa)) is uridylyltransferase. The segment at 384–739 (DSDDFIVDNN…VGFDEVRGVT (356 aa)) is uridylyl-removing. One can recognise an HD domain in the interval 499–622 (VDEHLIRCVG…VQSVEQMKLL (124 aa)). ACT domains lie at 740 to 822 (ELTI…VVAR) and 850 to 927 (VIEV…AVQP).

The protein belongs to the GlnD family. It depends on Mg(2+) as a cofactor.

The enzyme catalyses [protein-PII]-L-tyrosine + UTP = [protein-PII]-uridylyl-L-tyrosine + diphosphate. The catalysed reaction is [protein-PII]-uridylyl-L-tyrosine + H2O = [protein-PII]-L-tyrosine + UMP + H(+). Its activity is regulated as follows. Uridylyltransferase (UTase) activity is inhibited by glutamine, while glutamine activates uridylyl-removing (UR) activity. In terms of biological role, modifies, by uridylylation and deuridylylation, the PII regulatory proteins (GlnB and homologs), in response to the nitrogen status of the cell that GlnD senses through the glutamine level. Under low glutamine levels, catalyzes the conversion of the PII proteins and UTP to PII-UMP and PPi, while under higher glutamine levels, GlnD hydrolyzes PII-UMP to PII and UMP (deuridylylation). Thus, controls uridylylation state and activity of the PII proteins, and plays an important role in the regulation of nitrogen fixation and metabolism. This chain is Bifunctional uridylyltransferase/uridylyl-removing enzyme, found in Bradyrhizobium diazoefficiens (strain JCM 10833 / BCRC 13528 / IAM 13628 / NBRC 14792 / USDA 110).